Consider the following 833-residue polypeptide: Bifunctional dethiobiotin synthetase/7,8-diamino-pelargonic acid aminotransferase, mitochondrial (833 aa).

Residues 1–23 (MIPVTATLIRHRLRHLRHRIRFK) constitute a mitochondrion transit peptide. The segment at 36-299 (HPTYLIWSAN…VLVLPPVPKD (264 aa)) is dethiobiotin synthetase. 47 to 52 (SLGKTL) provides a ligand contact to ATP. Thr-51 serves as a coordination point for Mg(2+). Thr-81 contributes to the substrate binding site. Asp-88 is a Mg(2+) binding site. ATP contacts are provided by residues Asp-97, 210–213 (ETAG), and 270–271 (ED). Glu-210 contacts Mg(2+). Residues 332-830 (RLNGMAKLAG…TKLYKRLGEF (499 aa)) form a 7,8-diamino-pelargonic acid aminotransferase region. Residue 391-392 (WW) coordinates (8S)-8-amino-7-oxononanoate. 453 to 454 (GS) is a pyridoxal 5'-phosphate binding site. Tyr-495 contributes to the (8S)-8-amino-7-oxononanoate binding site. Residues 518–520 (PWY) and Glu-545 contribute to the ATP site. Asp-637 provides a ligand contact to pyridoxal 5'-phosphate. (8S)-8-amino-7-oxononanoate-binding residues include Lys-666 and Gly-700. Residue Lys-666 is modified to N6-(pyridoxal phosphate)lysine. Position 701–702 (701–702 (HS)) interacts with pyridoxal 5'-phosphate. Residue Arg-797 participates in (8S)-8-amino-7-oxononanoate binding.

In the N-terminal section; belongs to the dethiobiotin synthetase family. The protein in the C-terminal section; belongs to the class-III pyridoxal-phosphate-dependent aminotransferase family. BioA subfamily. As to quaternary structure, homodimer. Mg(2+) is required as a cofactor. Requires pyridoxal 5'-phosphate as cofactor.

The protein localises to the mitochondrion matrix. It carries out the reaction (7R,8S)-7,8-diammoniononanoate + CO2 + ATP = (4R,5S)-dethiobiotin + ADP + phosphate + 3 H(+). It catalyses the reaction (8S)-8-amino-7-oxononanoate + S-adenosyl-L-methionine = S-adenosyl-4-methylsulfanyl-2-oxobutanoate + (7R,8S)-7,8-diammoniononanoate. The protein operates within cofactor biosynthesis; biotin biosynthesis; biotin from 7,8-diaminononanoate: step 1/2. It functions in the pathway cofactor biosynthesis; biotin biosynthesis; 7,8-diaminononanoate from 8-amino-7-oxononanoate (SAM route): step 1/1. Functionally, bifunctional enzyme that catalyzes two different reactions involved in the biotin biosynthesis. Its function is as follows. Catalyzes a mechanistically unusual reaction, the ATP-dependent insertion of CO2 between the N7 and N8 nitrogen atoms of 7,8-diaminopelargonic acid (DAPA) to form an ureido ring. In terms of biological role, catalyzes the transfer of the alpha-amino group from S-adenosyl-L-methionine (SAM) to 7-keto-8-aminopelargonic acid (KAPA) to form 7,8-diaminopelargonic acid (DAPA). It is the only aminotransferase known to utilize SAM as an amino donor. This Arabidopsis thaliana (Mouse-ear cress) protein is Bifunctional dethiobiotin synthetase/7,8-diamino-pelargonic acid aminotransferase, mitochondrial.